Consider the following 359-residue polypeptide: UPF0284 protein MAE_56900 (359 aa).

This sequence belongs to the UPF0284 family.

The sequence is that of UPF0284 protein MAE_56900 from Microcystis aeruginosa (strain NIES-843 / IAM M-2473).